Reading from the N-terminus, the 171-residue chain is Putative auxin-responsive protein IAA29 (171 aa).

The PB1 domain maps to 19–114 (SRFVKVFMHG…TVKKIYIVPA (96 aa)). The segment at 117 to 171 (QNENDYQEEEEDNAAAAATADEDGDGAAADDGVAAAADDVDDVAGYTSNDDPSFD) is disordered. Low complexity predominate over residues 142–153 (GAAADDGVAAAA). The span at 162 to 171 (YTSNDDPSFD) shows a compositional bias: polar residues.

This sequence belongs to the Aux/IAA family. As to quaternary structure, homodimers and heterodimers.

Its subcellular location is the nucleus. Aux/IAA proteins are short-lived transcriptional factors that function as repressors of early auxin response genes at low auxin concentrations. The polypeptide is Putative auxin-responsive protein IAA29 (IAA29) (Oryza sativa subsp. japonica (Rice)).